The chain runs to 430 residues: Enolase (430 aa).

(2R)-2-phosphoglycerate is bound at residue Gln-163. Glu-205 serves as the catalytic Proton donor. Residues Asp-242, Glu-285, and Asp-312 each contribute to the Mg(2+) site. Residues Lys-337, Arg-366, Ser-367, and Lys-388 each contribute to the (2R)-2-phosphoglycerate site. Lys-337 acts as the Proton acceptor in catalysis.

Belongs to the enolase family. The cofactor is Mg(2+).

The protein localises to the cytoplasm. It is found in the secreted. Its subcellular location is the cell surface. It carries out the reaction (2R)-2-phosphoglycerate = phosphoenolpyruvate + H2O. It functions in the pathway carbohydrate degradation; glycolysis; pyruvate from D-glyceraldehyde 3-phosphate: step 4/5. Its function is as follows. Catalyzes the reversible conversion of 2-phosphoglycerate (2-PG) into phosphoenolpyruvate (PEP). It is essential for the degradation of carbohydrates via glycolysis. The chain is Enolase from Bifidobacterium animalis subsp. lactis (strain AD011).